Here is a 93-residue protein sequence, read N- to C-terminus: MLKPLGDRVIVEVVEEEEQTVGGIVLANNAKQKPQTGKVVAVGEGALTPEGKRLPMAVKVGDTVLYDKYAGSEVKYEGQDYLVLHEKDIMAIA.

The protein belongs to the GroES chaperonin family. In terms of assembly, heptamer of 7 subunits arranged in a ring. Interacts with the chaperonin GroEL.

The protein localises to the cytoplasm. Functionally, together with the chaperonin GroEL, plays an essential role in assisting protein folding. The GroEL-GroES system forms a nano-cage that allows encapsulation of the non-native substrate proteins and provides a physical environment optimized to promote and accelerate protein folding. GroES binds to the apical surface of the GroEL ring, thereby capping the opening of the GroEL channel. In Lacticaseibacillus paracasei (strain ATCC 334 / BCRC 17002 / CCUG 31169 / CIP 107868 / KCTC 3260 / NRRL B-441) (Lactobacillus paracasei), this protein is Co-chaperonin GroES.